Consider the following 164-residue polypeptide: 2S seed storage protein 1 (164 aa).

The first 21 residues, 1–21 (MANKLFLVCAALALCFLLTNA), serve as a signal peptide directing secretion. 3 consecutive propeptides follow at residues 22–37 (SIYR…DATN), 74–83 (EFDFEDDMEN), and 163–164 (FY).

The protein belongs to the 2S seed storage albumins family. As to quaternary structure, the mature protein consists of a small and a large chain linked by disulfide bonds.

This is a 2S seed storage protein. The chain is 2S seed storage protein 1 (AT2S1) from Arabidopsis thaliana (Mouse-ear cress).